The sequence spans 654 residues: Chaperone protein HtpG (654 aa).

An a; substrate-binding region spans residues 1–344 (MTVENAPQRE…SDDLPLNVSR (344 aa)). A b region spans residues 345-556 (ELLQDSQVVR…EGGSPAYLER (212 aa)). The interval 557–654 (LLQQRGRGAG…AQTPASATAS (98 aa)) is c.

Belongs to the heat shock protein 90 family. In terms of assembly, homodimer.

The protein localises to the cytoplasm. Functionally, molecular chaperone. Has ATPase activity. This is Chaperone protein HtpG from Myxococcus xanthus (strain DK1622).